An 83-amino-acid chain; its full sequence is Neurotoxin 3FTx-RI (83 aa).

The first 21 residues, 1–21 (MKTLLLTLVVLTIVCLDLGHT), serve as a signal peptide directing secretion. Cystine bridges form between Cys-24-Cys-45, Cys-38-Cys-62, Cys-64-Cys-75, and Cys-76-Cys-81.

The protein belongs to the three-finger toxin family. Short-chain subfamily. Type I alpha-neurotoxin sub-subfamily. As to expression, expressed by the venom gland.

It localises to the secreted. Binds to muscle nicotinic acetylcholine receptor (nAChR) and inhibit acetylcholine from binding to the receptor, thereby impairing neuromuscular transmission. The sequence is that of Neurotoxin 3FTx-RI from Bungarus fasciatus (Banded krait).